A 315-amino-acid polypeptide reads, in one-letter code: Ornithine carbamoyltransferase (315 aa).

Residues 57–60, Q84, R108, and 135–138 each bind carbamoyl phosphate; these read STRT and HPCQ. L-ornithine contacts are provided by residues N166, D230, and 234–235; that span reads SM. Residues 270–271 and R298 contribute to the carbamoyl phosphate site; that span reads CL.

It belongs to the aspartate/ornithine carbamoyltransferase superfamily. OTCase family.

Its subcellular location is the cytoplasm. It carries out the reaction carbamoyl phosphate + L-ornithine = L-citrulline + phosphate + H(+). It participates in amino-acid biosynthesis; L-arginine biosynthesis; L-arginine from L-ornithine and carbamoyl phosphate: step 1/3. Reversibly catalyzes the transfer of the carbamoyl group from carbamoyl phosphate (CP) to the N(epsilon) atom of ornithine (ORN) to produce L-citrulline. The sequence is that of Ornithine carbamoyltransferase from Thermococcus kodakarensis (strain ATCC BAA-918 / JCM 12380 / KOD1) (Pyrococcus kodakaraensis (strain KOD1)).